A 608-amino-acid chain; its full sequence is UvrABC system protein C (608 aa).

Positions 13 to 91 (HDPGVYRMFD…IKTFQPRYNV (79 aa)) constitute a GIY-YIG domain. The UVR domain maps to 201-236 (QQVLDHLIGKMERASRALNFEEAARYRDQIQAVRSV).

Belongs to the UvrC family. As to quaternary structure, interacts with UvrB in an incision complex.

It is found in the cytoplasm. The UvrABC repair system catalyzes the recognition and processing of DNA lesions. UvrC both incises the 5' and 3' sides of the lesion. The N-terminal half is responsible for the 3' incision and the C-terminal half is responsible for the 5' incision. The chain is UvrABC system protein C from Mannheimia succiniciproducens (strain KCTC 0769BP / MBEL55E).